The primary structure comprises 232 residues: MINDRVIVPLDVPTLEEAIALLDLLPRVSFWKVGLELFVSAGPSILEILKEREKRIFLDLKFHDIPNTVAGACRSATKYGVDLLTLHATAGRKALSQAVEAISTGDKPPKLLAISLLTSINSRELAFDLKIPLELPEYALQMALLAQETGIDGAVCSPQEVSQLRQVCGSDFLLVCPGVRPTWAEAGDQRRVMTPVSAIKAGADYLVIGRPITTASNPVEAWEKVCQELAEV.

Substrate contacts are provided by residues D11, K32, 59–68, T118, R180, Q189, G209, and R210; that span reads DLKFHDIPNT. The Proton donor role is filled by K61.

This sequence belongs to the OMP decarboxylase family. Type 1 subfamily. In terms of assembly, homodimer.

It carries out the reaction orotidine 5'-phosphate + H(+) = UMP + CO2. Its pathway is pyrimidine metabolism; UMP biosynthesis via de novo pathway; UMP from orotate: step 2/2. Functionally, catalyzes the decarboxylation of orotidine 5'-monophosphate (OMP) to uridine 5'-monophosphate (UMP). The polypeptide is Orotidine 5'-phosphate decarboxylase (Gloeothece citriformis (strain PCC 7424) (Cyanothece sp. (strain PCC 7424))).